We begin with the raw amino-acid sequence, 697 residues long: Elongation factor G (697 aa).

The 276-residue stretch at 10-285 folds into the tr-type G domain; it reads AKTRNIGIMA…GVIDYLPSPL (276 aa). GTP is bound by residues 19 to 26, 83 to 87, and 137 to 140; these read AHIDAGKT, DTPGH, and NKMD.

Belongs to the TRAFAC class translation factor GTPase superfamily. Classic translation factor GTPase family. EF-G/EF-2 subfamily.

Its subcellular location is the cytoplasm. Catalyzes the GTP-dependent ribosomal translocation step during translation elongation. During this step, the ribosome changes from the pre-translocational (PRE) to the post-translocational (POST) state as the newly formed A-site-bound peptidyl-tRNA and P-site-bound deacylated tRNA move to the P and E sites, respectively. Catalyzes the coordinated movement of the two tRNA molecules, the mRNA and conformational changes in the ribosome. This is Elongation factor G from Lactobacillus acidophilus (strain ATCC 700396 / NCK56 / N2 / NCFM).